The chain runs to 128 residues: MIVRTLDECRDSERRVASETWESVRMLLKNDNMGFSFHITTIYQDTETHIHYKNHLESVYCMSGEGEIEVVGGETYPIKPGTLYILDKHDEHYLRAYKDKEMVMACVFNPPITGAEVHDENGVYPVLD.

It belongs to the ectoine synthase family.

The enzyme catalyses (2S)-4-acetamido-2-aminobutanoate = L-ectoine + H2O. The protein operates within amine and polyamine biosynthesis; ectoine biosynthesis; L-ectoine from L-aspartate 4-semialdehyde: step 3/3. Its function is as follows. Catalyzes the circularization of gamma-N-acetyl-alpha,gamma-diaminobutyric acid (ADABA) to ectoine (1,4,5,6-tetrahydro-2-methyl-4-pyrimidine carboxylic acid), which is an excellent osmoprotectant. This chain is L-ectoine synthase, found in Aliivibrio fischeri (strain ATCC 700601 / ES114) (Vibrio fischeri).